The sequence spans 160 residues: Crossover junction endodeoxyribonuclease RuvC (160 aa).

Residues aspartate 7, glutamate 70, and aspartate 142 contribute to the active site. Mg(2+) contacts are provided by aspartate 7, glutamate 70, and aspartate 142.

The protein belongs to the RuvC family. Homodimer which binds Holliday junction (HJ) DNA. The HJ becomes 2-fold symmetrical on binding to RuvC with unstacked arms; it has a different conformation from HJ DNA in complex with RuvA. In the full resolvosome a probable DNA-RuvA(4)-RuvB(12)-RuvC(2) complex forms which resolves the HJ. It depends on Mg(2+) as a cofactor.

The protein localises to the cytoplasm. It carries out the reaction Endonucleolytic cleavage at a junction such as a reciprocal single-stranded crossover between two homologous DNA duplexes (Holliday junction).. Its function is as follows. The RuvA-RuvB-RuvC complex processes Holliday junction (HJ) DNA during genetic recombination and DNA repair. Endonuclease that resolves HJ intermediates. Cleaves cruciform DNA by making single-stranded nicks across the HJ at symmetrical positions within the homologous arms, yielding a 5'-phosphate and a 3'-hydroxyl group; requires a central core of homology in the junction. The consensus cleavage sequence is 5'-(A/T)TT(C/G)-3'. Cleavage occurs on the 3'-side of the TT dinucleotide at the point of strand exchange. HJ branch migration catalyzed by RuvA-RuvB allows RuvC to scan DNA until it finds its consensus sequence, where it cleaves and resolves the cruciform DNA. This is Crossover junction endodeoxyribonuclease RuvC from Ehrlichia ruminantium (strain Gardel).